A 172-amino-acid polypeptide reads, in one-letter code: Endoribonuclease YbeY (172 aa).

Residues histidine 134, histidine 138, and histidine 144 each contribute to the Zn(2+) site.

Belongs to the endoribonuclease YbeY family. Requires Zn(2+) as cofactor.

It is found in the cytoplasm. Functionally, single strand-specific metallo-endoribonuclease involved in late-stage 70S ribosome quality control and in maturation of the 3' terminus of the 16S rRNA. The chain is Endoribonuclease YbeY from Burkholderia cenocepacia (strain HI2424).